Reading from the N-terminus, the 231-residue chain is Ribonuclease 3 (231 aa).

In terms of domain architecture, RNase III spans 8 to 135 (VGDLERRIGH…LMAALYQDGG (128 aa)). E48 lines the Mg(2+) pocket. Active-site residues include D52 and E124. E124 serves as a coordination point for Mg(2+). In terms of domain architecture, DRBM spans 161–230 (DPKTALQEWA…AKALLEREGA (70 aa)). The disordered stretch occupies residues 210 to 231 (GKSRQEAEKAAAKALLEREGAG). Residues 212–231 (SRQEAEKAAAKALLEREGAG) show a composition bias toward basic and acidic residues.

It belongs to the ribonuclease III family. Homodimer. The cofactor is Mg(2+).

The protein localises to the cytoplasm. The enzyme catalyses Endonucleolytic cleavage to 5'-phosphomonoester.. Functionally, digests double-stranded RNA. Involved in the processing of primary rRNA transcript to yield the immediate precursors to the large and small rRNAs (23S and 16S). Processes some mRNAs, and tRNAs when they are encoded in the rRNA operon. Processes pre-crRNA and tracrRNA of type II CRISPR loci if present in the organism. The sequence is that of Ribonuclease 3 from Caulobacter vibrioides (strain ATCC 19089 / CIP 103742 / CB 15) (Caulobacter crescentus).